Consider the following 149-residue polypeptide: MQIWVDADACPKVVKEVLFRAATRTGIQLTLVANHYIPVPSAANIRSMQVEAGFDVADDEIVKRSEAGDLVISADIPLAAELIEKKVQVLNPRGELYTEATIKARLNIRDFMDTMRASGIQTGGPAPLSQTERREFANQLDRILAKAKI.

It belongs to the UPF0178 family.

The chain is UPF0178 protein VF_0601 from Aliivibrio fischeri (strain ATCC 700601 / ES114) (Vibrio fischeri).